Consider the following 341-residue polypeptide: Glycerol-3-phosphate dehydrogenase [NAD(P)+] (341 aa).

Residues S14, F15, R35, and K108 each coordinate NADPH. Sn-glycerol 3-phosphate-binding residues include K108 and G136. A140 lines the NADPH pocket. Residues K191, D244, S254, R255, and N256 each contribute to the sn-glycerol 3-phosphate site. K191 serves as the catalytic Proton acceptor. R255 serves as a coordination point for NADPH. NADPH contacts are provided by V279 and E281.

It belongs to the NAD-dependent glycerol-3-phosphate dehydrogenase family.

The protein localises to the cytoplasm. It carries out the reaction sn-glycerol 3-phosphate + NAD(+) = dihydroxyacetone phosphate + NADH + H(+). The catalysed reaction is sn-glycerol 3-phosphate + NADP(+) = dihydroxyacetone phosphate + NADPH + H(+). Its pathway is membrane lipid metabolism; glycerophospholipid metabolism. Catalyzes the reduction of the glycolytic intermediate dihydroxyacetone phosphate (DHAP) to sn-glycerol 3-phosphate (G3P), the key precursor for phospholipid synthesis. In Pseudomonas entomophila (strain L48), this protein is Glycerol-3-phosphate dehydrogenase [NAD(P)+].